A 273-amino-acid polypeptide reads, in one-letter code: Large ribosomal subunit protein uL2 (273 aa).

2 disordered regions span residues 31-50 (APLL…GRIT) and 221-273 (RGTA…RRGK). A compositionally biased stretch (basic residues) spans 253–273 (KGKKTRHNKRTDKYIVRRRGK).

This sequence belongs to the universal ribosomal protein uL2 family. Part of the 50S ribosomal subunit. Forms a bridge to the 30S subunit in the 70S ribosome.

Functionally, one of the primary rRNA binding proteins. Required for association of the 30S and 50S subunits to form the 70S ribosome, for tRNA binding and peptide bond formation. It has been suggested to have peptidyltransferase activity; this is somewhat controversial. Makes several contacts with the 16S rRNA in the 70S ribosome. In Actinobacillus pleuropneumoniae serotype 7 (strain AP76), this protein is Large ribosomal subunit protein uL2.